The following is an 860-amino-acid chain: Anoctamin-7 (860 aa).

Topologically, residues 1 to 297 (MLRKQAGEED…YFAWLGFYTG (297 aa)) are cytoplasmic. A disordered region spans residues 24 to 50 (NGCSYGSTAQASEAGKQQVAPSRVGSS). A helical membrane pass occupies residues 298 to 318 (WLLPAAVVGTVVFLAGCFLVF). The Extracellular segment spans residues 319-362 (SDVPTQELCHSSDTFDMCPLCSDCSFWLLSSACTLAQAGRLFDH). Residues 363–383 (GGTVFFSLFMALWAVLLLEYW) form a helical membrane-spanning segment. Over 384–441 (KRKNATLAYRWDCSDYEDIEERPRPQFAATAPMTALNPITGEDEPYFPEKNRVRRMLA) the chain is Cytoplasmic. Residues 442–462 (GSVVLLMMVAVVIMCLVSIIL) form a helical membrane-spanning segment. The Extracellular segment spans residues 463 to 492 (YRAVMAIIVSKSNNAFLSAWASRIASLTGS). A helical transmembrane segment spans residues 493-513 (VVNLVFILILSKVYVILAQVL). At 514-530 (TRWEMHRTQTAFEDAFT) the chain is on the cytoplasmic side. A helical transmembrane segment spans residues 531 to 551 (LKVFIFQFVNFYASPVYIAFF). Topologically, residues 552–652 (KGRFVGYPGN…FHEYLEMVLQ (101 aa)) are extracellular. A helical membrane pass occupies residues 653–673 (FGFVTIFVAACPLAPLFALLN). Residues 674–701 (NWVEIRLDARKFVCEYRRPVAERAQDIG) are Cytoplasmic-facing. Residues 702–722 (IWFHILAGLTHLAVISNAFLL) form a helical membrane-spanning segment. The Extracellular portion of the chain corresponds to 723–779 (AFSSDFLPRVYYSWTRAPDLRGFLNFTLARAPPTFTSAHNRTCRYRAFRDDDGHYSP). 2 N-linked (GlcNAc...) asparagine glycosylation sites follow: Asn-747 and Asn-762. Residues 780–800 (TYWTLLAIRLAFVIVFEHVVF) traverse the membrane as a helical segment. Residues 801–860 (STGRFLDLLVPDIPESVEIKVKREYYLAKQALADNEALLGATGVKGEQPPSSEPSLGLPA) lie on the Cytoplasmic side of the membrane.

The protein belongs to the anoctamin family.

It is found in the cell membrane. Its subcellular location is the endoplasmic reticulum. The catalysed reaction is a 1,2-diacyl-sn-glycero-3-phospho-L-serine(in) = a 1,2-diacyl-sn-glycero-3-phospho-L-serine(out). The enzyme catalyses a beta-D-galactosyl-(1&lt;-&gt;1')-N-acylsphing-4-enine(out) = a beta-D-galactosyl-(1&lt;-&gt;1')-N-acylsphing-4-enine(in). It catalyses the reaction a 1,2-diacyl-sn-glycero-3-phosphocholine(in) = a 1,2-diacyl-sn-glycero-3-phosphocholine(out). Functionally, has calcium-dependent phospholipid scramblase activity; scrambles phosphatidylserine, phosphatidylcholine and galactosylceramide. Does not exhibit calcium-activated chloride channel (CaCC) activity. May play a role in cell-cell interactions. In Rattus norvegicus (Rat), this protein is Anoctamin-7 (Ano7).